Here is a 184-residue protein sequence, read N- to C-terminus: Oligoribonuclease (184 aa).

The Exonuclease domain maps to 10–172 (LVWVDCEMTG…ADVLESIAEL (163 aa)). Y129 is an active-site residue.

The protein belongs to the oligoribonuclease family.

It localises to the cytoplasm. Functionally, 3'-to-5' exoribonuclease specific for small oligoribonucleotides. This Tropheryma whipplei (strain Twist) (Whipple's bacillus) protein is Oligoribonuclease.